The primary structure comprises 364 residues: Long-wave-sensitive opsin 1 (364 aa).

Over 1–52 (MTQRWGPQRLAGGQPHAGLEDSTRASIFTYTNSNATRGPFEGPNYHIAPRWV) the chain is Extracellular. A glycan (O-linked (GlcNAc) serine) is linked at Ser-22. The N-linked (GlcNAc...) asparagine glycan is linked to Asn-34. A helical transmembrane segment spans residues 53–77 (YHVTSAWMIFVVIASVFTNGLVLAA). Topologically, residues 78-89 (TMKFKKLRHPLN) are cytoplasmic. A helical membrane pass occupies residues 90–115 (WILVNLAVADLAETIIASTISVVNQI). Over 116–129 (YGYFVLGHPMCVLE) the chain is Extracellular. A disulfide bond links Cys-126 and Cys-203. A helical membrane pass occupies residues 130–149 (GYTVSLCGITGLWSLAIISW). The Cytoplasmic segment spans residues 150-168 (ERWLVVCKPFGNVRFDAKL). The helical transmembrane segment at 169–192 (AIAGIAFSWIWAAVWTAPPIFGWS) threads the bilayer. Residues 193–218 (RYWPHGLKTSCGPDVFSGSSYPGVQS) lie on the Extracellular side of the membrane. A helical membrane pass occupies residues 219 to 246 (YMIVLMITCCIIPLSVIVLCYLQVWLAI). At 247–268 (RAVAKQQKESESTQKAEKEVTR) the chain is on the cytoplasmic side. Residues 269–292 (MVMVMIFAYCVCWGPYTFFACFAA) traverse the membrane as a helical segment. Residues 293 to 300 (AHPGYAFH) lie on the Extracellular side of the membrane. The helical transmembrane segment at 301–325 (PLVAALPAYFAKSATIYNPIIYVFM) threads the bilayer. The residue at position 312 (Lys-312) is an N6-(retinylidene)lysine. The Cytoplasmic segment spans residues 326–364 (NRQFRNCIMQLFGKKVDDGSELSSASRTEASSVSSVSPA).

It belongs to the G-protein coupled receptor 1 family. Opsin subfamily. In terms of processing, phosphorylated on some or all of the serine and threonine residues present in the C-terminal region. The three color pigments are found in the cone photoreceptor cells. Expressed in retina.

Its subcellular location is the membrane. In terms of biological role, visual pigments are the light-absorbing molecules that mediate vision. They consist of an apoprotein, opsin, covalently linked to cis-retinal. The sequence is that of Long-wave-sensitive opsin 1 (OPN1LW) from Felis catus (Cat).